Consider the following 341-residue polypeptide: Formimidoylglutamase (341 aa).

6 residues coordinate Mn(2+): His133, Asp162, His164, Asp166, Cys253, and Asp255.

It belongs to the arginase family. Mn(2+) serves as cofactor.

It catalyses the reaction N-formimidoyl-L-glutamate + H2O = formamide + L-glutamate. Its pathway is amino-acid degradation; L-histidine degradation into L-glutamate; L-glutamate from N-formimidoyl-L-glutamate (hydrolase route): step 1/1. In terms of biological role, catalyzes the conversion of N-formimidoyl-L-glutamate to L-glutamate and formamide. In Aromatoleum aromaticum (strain DSM 19018 / LMG 30748 / EbN1) (Azoarcus sp. (strain EbN1)), this protein is Formimidoylglutamase.